Consider the following 681-residue polypeptide: DNA ligase (681 aa).

NAD(+) contacts are provided by residues 45–49, 94–95, and glutamate 120; these read DFDFD and SL. Lysine 122 (N6-AMP-lysine intermediate) is an active-site residue. NAD(+) contacts are provided by arginine 143, glutamate 177, lysine 289, and lysine 313. Residues cysteine 403, cysteine 406, cysteine 421, and cysteine 426 each contribute to the Zn(2+) site. A BRCT domain is found at 593–681; the sequence is ADQQPFAGQS…SLKIDFKNLI (89 aa).

This sequence belongs to the NAD-dependent DNA ligase family. LigA subfamily. The cofactor is Mg(2+). Mn(2+) serves as cofactor.

It carries out the reaction NAD(+) + (deoxyribonucleotide)n-3'-hydroxyl + 5'-phospho-(deoxyribonucleotide)m = (deoxyribonucleotide)n+m + AMP + beta-nicotinamide D-nucleotide.. Its function is as follows. DNA ligase that catalyzes the formation of phosphodiester linkages between 5'-phosphoryl and 3'-hydroxyl groups in double-stranded DNA using NAD as a coenzyme and as the energy source for the reaction. It is essential for DNA replication and repair of damaged DNA. This Leptospira interrogans serogroup Icterohaemorrhagiae serovar copenhageni (strain Fiocruz L1-130) protein is DNA ligase.